Consider the following 338-residue polypeptide: Methionine import ATP-binding protein MetN 1 (338 aa).

The 240-residue stretch at 2-241 folds into the ABC transporter domain; it reads IELHQVSKSF…AKHATTKRFV (240 aa). 38 to 45 is a binding site for ATP; the sequence is GYSGAGKS.

This sequence belongs to the ABC transporter superfamily. Methionine importer (TC 3.A.1.24) family. The complex is composed of two ATP-binding proteins (MetN), two transmembrane proteins (MetI) and a solute-binding protein (MetQ).

It localises to the cell membrane. The enzyme catalyses L-methionine(out) + ATP + H2O = L-methionine(in) + ADP + phosphate + H(+). It catalyses the reaction D-methionine(out) + ATP + H2O = D-methionine(in) + ADP + phosphate + H(+). Part of the ABC transporter complex MetNIQ involved in methionine import. Responsible for energy coupling to the transport system. This Listeria innocua serovar 6a (strain ATCC BAA-680 / CLIP 11262) protein is Methionine import ATP-binding protein MetN 1.